Consider the following 689-residue polypeptide: MSYILVTGGAGYIGSHTVVELVNNGYNVVVVDNLVNSSYDVIVRIEVLTRKQIPFFKIDLNDHDALDQVFKLYPIQAVLHFAALKAVGESTKFPLNYYSNNVGGAISLLKVMEENNVKNIVFSSSATVYGDATRFENMIPIPEHCPTGPTNPYGETKITIENIIRDVYANDKSWKCAILRYFNPIGAHPSGLIGEDPLGIPNNLLPFLAQVAIGRREKLSVFGSDYNSKDGTPIRDYIHVIDLAKGHIAALNYLFNHKDNGLCREWNLGTGNGSTVFEVFNAFCEAVGKKLPFEVVGRRDGDVLNLTANPKRANTELKWKAQLSINDACKDLWNWTTKNPFGFQINNYSWTKFDSESLTNYDRLNTVRTFNGKFEVSISNHGATIVAAKLNGIKLNLGFDNLKGYLREDNPFFGATIGRVANRISKGDLLINGTHYQVGLNELHRTSLHGGTYGYNKRTFLGPIVKTNEKEKETTMEFVLIDLDGTEGYPGDVETKVIYTVRDTGVGGELGIEYEAKLLEESGRDSTAVSLTNHSYWNIGNQPSIEGTHIKLVSNKHLESNPLDSTPTGKIVTSTDLDSQNSAKLGPDGPVFDYCFVTKQQDKLDTRNDELRVVATATHPKTRIAFTTLTTEPAFQFYTGDGVDVAGVFTKRSGFCLEASRYIYNPKWFIPLNKGEVYGSYTIYRFENF.

The interval 1–345 (MSYILVTGGA…TTKNPFGFQI (345 aa)) is galactowaldenase. 3 to 34 (YILVTGGAGYIGSHTVVELVNNGYNVVVVDNL) is an NAD(+) binding site. Positions 346 to 689 (NNYSWTKFDS…SYTIYRFENF (344 aa)) are mutarotase. H534 (for mutarotase activity) is an active-site residue.

This sequence in the N-terminal section; belongs to the NAD(P)-dependent epimerase/dehydratase family. In the C-terminal section; belongs to the aldose epimerase family. NAD(+) is required as a cofactor.

The catalysed reaction is UDP-alpha-D-glucose = UDP-alpha-D-galactose. The enzyme catalyses alpha-D-glucose = beta-D-glucose. Its pathway is carbohydrate metabolism; galactose metabolism. It participates in carbohydrate metabolism; hexose metabolism. In terms of biological role, mutarotase converts alpha-aldose to the beta-anomer. It is active on D-glucose, L-arabinose, D-xylose, D-galactose, maltose and lactose. The protein is Bifunctional protein GAL10 (GAL10) of Pachysolen tannophilus (Yeast).